A 1025-amino-acid chain; its full sequence is Multidrug resistance protein MdtC (1025 aa).

12 helical membrane passes run Phe-3–Leu-23, Glu-333–Leu-353, Ile-360–Cys-380, Leu-387–Leu-407, Val-431–Leu-451, Phe-463–Pro-483, Leu-528–Pro-548, Val-853–Ser-873, Val-875–Leu-895, Leu-897–Val-917, Pro-953–Gly-973, and Ile-984–Val-1004.

The protein belongs to the resistance-nodulation-cell division (RND) (TC 2.A.6) family. MdtC subfamily. In terms of assembly, part of a tripartite efflux system composed of MdtA, MdtB and MdtC. MdtC forms a heteromultimer with MdtB.

It is found in the cell inner membrane. The MdtABC tripartite complex confers resistance against novobiocin and deoxycholate. In Escherichia coli O8 (strain IAI1), this protein is Multidrug resistance protein MdtC.